The following is a 313-amino-acid chain: Aspartate carbamoyltransferase catalytic subunit (313 aa).

R51 and T52 together coordinate carbamoyl phosphate. Residue K80 coordinates L-aspartate. The carbamoyl phosphate site is built by R101, H129, and Q132. Residues R162 and R224 each contribute to the L-aspartate site. Carbamoyl phosphate-binding residues include L263 and P264.

Belongs to the aspartate/ornithine carbamoyltransferase superfamily. ATCase family. As to quaternary structure, heterododecamer (2C3:3R2) of six catalytic PyrB chains organized as two trimers (C3), and six regulatory PyrI chains organized as three dimers (R2).

The enzyme catalyses carbamoyl phosphate + L-aspartate = N-carbamoyl-L-aspartate + phosphate + H(+). It participates in pyrimidine metabolism; UMP biosynthesis via de novo pathway; (S)-dihydroorotate from bicarbonate: step 2/3. Catalyzes the condensation of carbamoyl phosphate and aspartate to form carbamoyl aspartate and inorganic phosphate, the committed step in the de novo pyrimidine nucleotide biosynthesis pathway. This is Aspartate carbamoyltransferase catalytic subunit from Bacteroides thetaiotaomicron (strain ATCC 29148 / DSM 2079 / JCM 5827 / CCUG 10774 / NCTC 10582 / VPI-5482 / E50).